Here is a 159-residue protein sequence, read N- to C-terminus: ATP synthase subunit b 2 (159 aa).

The helical transmembrane segment at 1 to 21 (MDATFWAFIALVIFVAIVVYM) threads the bilayer.

It belongs to the ATPase B chain family. F-type ATPases have 2 components, F(1) - the catalytic core - and F(0) - the membrane proton channel. F(1) has five subunits: alpha(3), beta(3), gamma(1), delta(1), epsilon(1). F(0) has three main subunits: a(1), b(2) and c(10-14). The alpha and beta chains form an alternating ring which encloses part of the gamma chain. F(1) is attached to F(0) by a central stalk formed by the gamma and epsilon chains, while a peripheral stalk is formed by the delta and b chains.

It is found in the cell inner membrane. F(1)F(0) ATP synthase produces ATP from ADP in the presence of a proton or sodium gradient. F-type ATPases consist of two structural domains, F(1) containing the extramembraneous catalytic core and F(0) containing the membrane proton channel, linked together by a central stalk and a peripheral stalk. During catalysis, ATP synthesis in the catalytic domain of F(1) is coupled via a rotary mechanism of the central stalk subunits to proton translocation. Functionally, component of the F(0) channel, it forms part of the peripheral stalk, linking F(1) to F(0). This is ATP synthase subunit b 2 from Brucella abortus (strain S19).